Consider the following 486-residue polypeptide: Glutamyl-tRNA(Gln) amidotransferase subunit A (486 aa).

Residues lysine 79 and serine 154 each act as charge relay system in the active site. The active-site Acyl-ester intermediate is the serine 178.

This sequence belongs to the amidase family. GatA subfamily. In terms of assembly, heterotrimer of A, B and C subunits.

It catalyses the reaction L-glutamyl-tRNA(Gln) + L-glutamine + ATP + H2O = L-glutaminyl-tRNA(Gln) + L-glutamate + ADP + phosphate + H(+). In terms of biological role, allows the formation of correctly charged Gln-tRNA(Gln) through the transamidation of misacylated Glu-tRNA(Gln) in organisms which lack glutaminyl-tRNA synthetase. The reaction takes place in the presence of glutamine and ATP through an activated gamma-phospho-Glu-tRNA(Gln). The polypeptide is Glutamyl-tRNA(Gln) amidotransferase subunit A (Dehalococcoides mccartyi (strain ATCC BAA-2100 / JCM 16839 / KCTC 5957 / BAV1)).